The primary structure comprises 473 residues: UDP-N-acetylmuramate--L-alanine ligase (473 aa).

123–129 contacts ATP; the sequence is GTHGKTT.

It belongs to the MurCDEF family.

The protein resides in the cytoplasm. It carries out the reaction UDP-N-acetyl-alpha-D-muramate + L-alanine + ATP = UDP-N-acetyl-alpha-D-muramoyl-L-alanine + ADP + phosphate + H(+). Its pathway is cell wall biogenesis; peptidoglycan biosynthesis. In terms of biological role, cell wall formation. The chain is UDP-N-acetylmuramate--L-alanine ligase from Marinomonas sp. (strain MWYL1).